The sequence spans 381 residues: O-phospho-L-seryl-tRNA:Cys-tRNA synthase (381 aa).

Pyridoxal 5'-phosphate-binding positions include 86 to 87 (AR), Asn192, and 215 to 217 (SGH). An N6-(pyridoxal phosphate)lysine modification is found at Lys218.

This sequence belongs to the SepCysS family. In terms of assembly, homodimer. Interacts with SepRS. Pyridoxal 5'-phosphate is required as a cofactor.

It carries out the reaction O-phospho-L-seryl-tRNA(Cys) + hydrogen sulfide + H(+) = L-cysteinyl-tRNA(Cys) + phosphate. Functionally, converts O-phospho-L-seryl-tRNA(Cys) (Sep-tRNA(Cys)) to L-cysteinyl-tRNA(Cys) (Cys-tRNA(Cys)). The protein is O-phospho-L-seryl-tRNA:Cys-tRNA synthase of Methanococcus vannielii (strain ATCC 35089 / DSM 1224 / JCM 13029 / OCM 148 / SB).